Consider the following 464-residue polypeptide: ATP synthase subunit beta (464 aa).

Position 148 to 155 (148 to 155 (GGAGVGKT)) interacts with ATP.

This sequence belongs to the ATPase alpha/beta chains family. As to quaternary structure, F-type ATPases have 2 components, CF(1) - the catalytic core - and CF(0) - the membrane proton channel. CF(1) has five subunits: alpha(3), beta(3), gamma(1), delta(1), epsilon(1). CF(0) has three main subunits: a(1), b(2) and c(9-12). The alpha and beta chains form an alternating ring which encloses part of the gamma chain. CF(1) is attached to CF(0) by a central stalk formed by the gamma and epsilon chains, while a peripheral stalk is formed by the delta and b chains.

The protein localises to the cell inner membrane. It carries out the reaction ATP + H2O + 4 H(+)(in) = ADP + phosphate + 5 H(+)(out). In terms of biological role, produces ATP from ADP in the presence of a proton gradient across the membrane. The catalytic sites are hosted primarily by the beta subunits. This is ATP synthase subunit beta from Acinetobacter baumannii (strain AB0057).